We begin with the raw amino-acid sequence, 210 residues long: MTDLAQKELMVQLGRSFYERGYTVGGAGNLSVRLDDNRVLVTPTGSSLGRLSVERLSVLDMEGNLLGGDKPSKEAVFHLAMYKKNPECKAIVHLHSTYLTALSCLDNLDPNNAIEPFTPYYVMRVGKMQVIPYYRPGSPKIAEELSNRALTGKAFLLANHGVVVTGSDLLDAADNTEELEETAKLFFTLQGQKIRYLTDTEVKDLENRGK.

Glu74 serves as the catalytic Proton acceptor. Residues Glu74, His93, and His95 each contribute to the Zn(2+) site. The active-site Proton donor is the Tyr120. His160 is a Zn(2+) binding site.

The protein belongs to the aldolase class II family. AraD/FucA subfamily. Zn(2+) is required as a cofactor.

The catalysed reaction is 3-dehydro-4-O-phospho-D-erythronate + H(+) = dihydroxyacetone phosphate + CO2. It catalyses the reaction 3-dehydro-4-O-phospho-L-erythronate + H(+) = dihydroxyacetone phosphate + CO2. Functionally, catalyzes the decarboxylation of 3-oxo-tetronate 4-phosphate to dihydroxyacetone phosphate (DHAP) and CO(2). The protein is 3-oxo-tetronate 4-phosphate decarboxylase of Haemophilus influenzae (strain ATCC 51907 / DSM 11121 / KW20 / Rd).